A 142-amino-acid chain; its full sequence is Ig heavy chain V region IR2 (142 aa).

The N-terminal stretch at 1-19 (MDLRLTYVFIVAILKGVLC) is a signal peptide. Residues 20–133 (EVKLEESGGG…YSENWFVYWG (114 aa)) form the Ig-like domain.

The sequence is that of Ig heavy chain V region IR2 from Rattus norvegicus (Rat).